A 734-amino-acid chain; its full sequence is Protein arginine N-methyltransferase 5 (734 aa).

The span at 1–16 (MSNRTYADNLFPQQVA) shows a compositional bias: polar residues. Residues 1-39 (MSNRTYADNLFPQQVAEQHEEQMSSGSSPKSNSPSRSIS) are disordered. A compositionally biased stretch (low complexity) spans 24 to 39 (SSGSSPKSNSPSRSIS). The segment at 42-329 (EAANSRIHIG…EYSQALRHAV (288 aa)) is TIM barrel. An SAM-dependent MTase PRMT-type domain is found at 360-706 (LQAPLQPLSE…VDNTGVWYEW (347 aa)). Position 376 (Tyr376) interacts with S-adenosyl-L-methionine. An a protein-binding site is contributed by Phe379. S-adenosyl-L-methionine is bound by residues 385–386 (KY), Glu450, and 477–478 (DM). A protein is bound by residues Glu499 and Glu508. Active-site proton donor/acceptor residues include Glu499 and Glu508. Positions 529 to 734 (PQKYTSYVKP…PNGESYYMRM (206 aa)) are beta barrel. The tract at residues 541–589 (STHIHQTIKAQSIPYLSRAIPSHGRGEPELDEDEMWIQKYPQGHVRNNM) is dimerization.

This sequence belongs to the class I-like SAM-binding methyltransferase superfamily. Protein arginine N-methyltransferase family. As to quaternary structure, homodimer. Interacts with cep-1 (via C-terminus domain); does not methylate cep-1. Interacts with cbp-1 (via N-terminus domain and HAT domain); the interaction results in methylation of cbp-1. Component of a complex that contains cep-1 and cbp-1. May interact with pid-2, pid-4 and pid-5.

It localises to the nucleus. The enzyme catalyses L-arginyl-[protein] + 2 S-adenosyl-L-methionine = N(omega),N(omega)'-dimethyl-L-arginyl-[protein] + 2 S-adenosyl-L-homocysteine + 2 H(+). Catalyzes the symmetrical dimethylation of arginine residues in targets such as small nuclear ribonucleoproteins, histone H2A/H4 and cbp-1. Dimethylation occurs in a distributive manner where the protein is released after the addition of the first methyl group prior to rebinding for the addition of the second methyl group. Plays a role in the negative regulation of DNA damage-induced apoptosis. By methylating cbp-1, may prevent apoptosis by repressing the capacity of cbp-1 to enhance cep-1 dependent transcription activation of the programmed cell death activator egl-1. Plays a role in heat and oxidative stress resistance. The chain is Protein arginine N-methyltransferase 5 from Caenorhabditis elegans.